The following is a 102-amino-acid chain: Putative pterin-4-alpha-carbinolamine dehydratase (102 aa).

This sequence belongs to the pterin-4-alpha-carbinolamine dehydratase family.

It carries out the reaction (4aS,6R)-4a-hydroxy-L-erythro-5,6,7,8-tetrahydrobiopterin = (6R)-L-erythro-6,7-dihydrobiopterin + H2O. This chain is Putative pterin-4-alpha-carbinolamine dehydratase, found in Burkholderia vietnamiensis (strain G4 / LMG 22486) (Burkholderia cepacia (strain R1808)).